We begin with the raw amino-acid sequence, 119 residues long: Large ribosomal subunit protein bL20 (119 aa).

It belongs to the bacterial ribosomal protein bL20 family.

In terms of biological role, binds directly to 23S ribosomal RNA and is necessary for the in vitro assembly process of the 50S ribosomal subunit. It is not involved in the protein synthesizing functions of that subunit. The polypeptide is Large ribosomal subunit protein bL20 (Caldanaerobacter subterraneus subsp. tengcongensis (strain DSM 15242 / JCM 11007 / NBRC 100824 / MB4) (Thermoanaerobacter tengcongensis)).